Reading from the N-terminus, the 405-residue chain is MFNYEELFQTHKTPFYLYDFDKIKQAFLNYKEAFKGRKSLICYALKANSNLSILSLLAHLESGADCVSIGEIYRALKAGIKPYRIVFSGVGKSGFEIEQALKLNILFLNVESFMELTTIETIAQSLGIKARISIRINPNIDAKTHPYISTGLKENKFGVGEKEALEMFLWAKKSAFLEPVSVHFHIGSQLSDLEPIIEASQKVAKIAKSLIALGIDLRFFDVGGGIGVSYENEETIKLYDYAQGILNSLQGLDLTIICEPGRSIVAESGELITQVLYEKKAQNKRFVVVDAGMNDFLRPSLYHAKHAIRVITPSKGREISPCDVVGPVCESSDTFLKDAHLPELEPGDKLVIEKVGAYGSSMASQYNSRPKLLELALEDHKIRVIRKREALEDLWRLEEEGLKGV.

Lys-46 is modified (N6-(pyridoxal phosphate)lysine). Pyridoxal 5'-phosphate is bound by residues Gly-225 and 259–262 (EPGR). Arg-262, Arg-298, and Tyr-302 together coordinate substrate. The active-site Proton donor is Cys-329. Residues Glu-330 and Tyr-358 each contribute to the substrate site. Tyr-358 provides a ligand contact to pyridoxal 5'-phosphate.

This sequence belongs to the Orn/Lys/Arg decarboxylase class-II family. LysA subfamily. As to quaternary structure, homodimer. Requires pyridoxal 5'-phosphate as cofactor.

The enzyme catalyses meso-2,6-diaminopimelate + H(+) = L-lysine + CO2. It participates in amino-acid biosynthesis; L-lysine biosynthesis via DAP pathway; L-lysine from DL-2,6-diaminopimelate: step 1/1. Functionally, specifically catalyzes the decarboxylation of meso-diaminopimelate (meso-DAP) to L-lysine. The sequence is that of Diaminopimelate decarboxylase from Helicobacter pylori (strain ATCC 700392 / 26695) (Campylobacter pylori).